The primary structure comprises 301 residues: Immune-associated nucleotide-binding protein 5 (301 aa).

Positions 11–214 (EPVRNIVLVG…FTEENDLNEK (204 aa)) constitute an AIG1-type G domain. A G1 region spans residues 20–27 (GPTGNGKS). Residue 20-28 (GPTGNGKSS) participates in GTP binding. The interval 46–50 (CKTCK) is G2. A G3 region spans residues 63–66 (DTPG). The tract at residues 133–136 (TGGD) is G4. Positions 172 to 174 (NNK) are G5. Asn-173 lines the GTP pocket.

The protein belongs to the TRAFAC class TrmE-Era-EngA-EngB-Septin-like GTPase superfamily. AIG1/Toc34/Toc159-like paraseptin GTPase family. IAN subfamily. As to expression, expressed in pollen, cotyledons and lateral roots.

This chain is Immune-associated nucleotide-binding protein 5, found in Arabidopsis thaliana (Mouse-ear cress).